Consider the following 577-residue polypeptide: Scoloptoxin SSD14 (577 aa).

An N-terminal signal peptide occupies residues 1-25; that stretch reads MGTSYRKLGYVLFLMLGMIVEEGIA.

As to quaternary structure, heterodimer composed of subunits alpha and beta; probably disulfide-linked. Expressed by the venom gland.

It localises to the secreted. Functionally, dose-dependently induces human platelet aggregation on both plasma rich platelet and washed platelet (max. response at 3.2 ug/mL) and causes hemolysis against mouse and rabbit erythrocytes (35 and 65% respectively at 5 ug/mL). Does not show hemolytic activity against human erythrocytes (even at 100 ug/mL). The polypeptide is Scoloptoxin SSD14 (Scolopendra dehaani (Thai centipede)).